A 72-amino-acid polypeptide reads, in one-letter code: MSLYWNRKKSDTEKTRPMDIFLVSDFIVYYRRNMIANLMNDYRTLSIRVSCLNINKNWNLNRALYLLNIKNT.

This is an uncharacterized protein from Schizosaccharomyces pombe (strain 972 / ATCC 24843) (Fission yeast).